A 701-amino-acid polypeptide reads, in one-letter code: DC-STAMP domain-containing protein 2 (701 aa).

The next 4 helical transmembrane spans lie at 15 to 35 (TCGFTVGLSLATAFGLLELLG), 40 to 60 (PFGCLVTTVTLAAFLSLGMGF), 82 to 102 (LLLLVASFGLVLQGPCANTLQ), and 215 to 235 (FPHLCYALLPYKLLVCGLASL). Residues Asn-272 and Asn-284 are each glycosylated (N-linked (GlcNAc...) asparagine). The next 2 helical transmembrane spans lie at 310-330 (ALSLMGYTMPLLIGFLYIQAL) and 404-424 (LLIMLLLVFLDYGVFWLLDLA). A glycan (N-linked (GlcNAc...) asparagine) is linked at Asn-468. A helical transmembrane segment spans residues 488-508 (YIVIGTMYGLCFFVTLFGSYV). Positions 673–701 (LQEALGTNLSDKSTSKPERAGNRNQDRKQ) are disordered. Residues 685 to 701 (STSKPERAGNRNQDRKQ) are compositionally biased toward basic and acidic residues.

As to quaternary structure, interacts with DCST1. In terms of tissue distribution, expressed in testis.

The protein resides in the cytoplasmic vesicle. Its subcellular location is the secretory vesicle. It localises to the acrosome membrane. Its function is as follows. Essential sperm cell-surface protein required for sperm-egg fusion and fertilization. The polypeptide is DC-STAMP domain-containing protein 2 (Mus musculus (Mouse)).